The following is a 405-amino-acid chain: Methylamine dehydrogenase heavy chain (405 aa).

The first 36 residues, 1–36, serve as a signal peptide directing secretion; it reads MTTFDHPSMIRQPKPTGLAGGLVLAALMLSSSLALA.

It belongs to the aromatic amine dehydrogenase heavy chain family. As to quaternary structure, tetramer of two light and two heavy chains.

Its subcellular location is the periplasm. The enzyme catalyses 2 oxidized [amicyanin] + methylamine + H2O = 2 reduced [amicyanin] + formaldehyde + NH4(+) + 2 H(+). Its function is as follows. Methylamine dehydrogenase carries out the oxidation of methylamine. Electrons are passed from methylamine dehydrogenase to amicyanin. This Methylophilus methylotrophus (Bacterium W3A1) protein is Methylamine dehydrogenase heavy chain (mauB).